We begin with the raw amino-acid sequence, 212 residues long: Ribonuclease HII (212 aa).

One can recognise an RNase H type-2 domain in the interval 2–206; the sequence is TPLVGVDEAG…CERIRAEAEQ (205 aa). Residues D8, E9, and D101 each contribute to the a divalent metal cation site.

Belongs to the RNase HII family. The cofactor is Mn(2+). Mg(2+) serves as cofactor.

The protein localises to the cytoplasm. The catalysed reaction is Endonucleolytic cleavage to 5'-phosphomonoester.. In terms of biological role, endonuclease that specifically degrades the RNA of RNA-DNA hybrids. The sequence is that of Ribonuclease HII from Natronomonas pharaonis (strain ATCC 35678 / DSM 2160 / CIP 103997 / JCM 8858 / NBRC 14720 / NCIMB 2260 / Gabara) (Halobacterium pharaonis).